Here is a 252-residue protein sequence, read N- to C-terminus: Nicotinamide/nicotinic acid mononucleotide adenylyltransferase 3 (252 aa).

2 residues coordinate NAD(+): Ser14 and Phe15. 2 residues coordinate ATP: His22 and Lys56. NAD(+) is bound by residues Trp90, Thr93, Gly135, and Asp137. Lys140 contacts ATP. NAD(+) contacts are provided by Leu147, Trp148, Arg167, and Asn198. 203-206 (TYIR) is an ATP binding site.

This sequence belongs to the eukaryotic NMN adenylyltransferase family. In terms of assembly, homotetramer. Requires Mg(2+) as cofactor. In terms of tissue distribution, expressed in lung and spleen with lower levels in placenta and kidney.

Its subcellular location is the mitochondrion. It carries out the reaction beta-nicotinamide D-ribonucleotide + ATP + H(+) = diphosphate + NAD(+). The catalysed reaction is nicotinate beta-D-ribonucleotide + ATP + H(+) = deamido-NAD(+) + diphosphate. It participates in cofactor biosynthesis; NAD(+) biosynthesis; NAD(+) from nicotinamide D-ribonucleotide: step 1/1. It functions in the pathway cofactor biosynthesis; NAD(+) biosynthesis; deamido-NAD(+) from nicotinate D-ribonucleotide: step 1/1. With respect to regulation, activity is strongly inhibited by galotannin. Inhibited by P1-(adenosine-5')-P4-(nicotinic-acid-riboside-5')-tetraphosphate (Nap4AD). In terms of biological role, catalyzes the formation of NAD(+) from nicotinamide mononucleotide (NMN) and ATP. Can also use the deamidated form; nicotinic acid mononucleotide (NaMN) as substrate with the same efficiency. Can use triazofurin monophosphate (TrMP) as substrate. Can also use GTP and ITP as nucleotide donors. Also catalyzes the reverse reaction, i.e. the pyrophosphorolytic cleavage of NAD(+). For the pyrophosphorolytic activity, can use NAD(+), NADH, NaAD, nicotinic acid adenine dinucleotide phosphate (NHD), nicotinamide guanine dinucleotide (NGD) as substrates. Fails to cleave phosphorylated dinucleotides NADP(+), NADPH and NaADP(+). Protects against axonal degeneration following injury. May be involved in the maintenance of axonal integrity. Also functions as a stress-response chaperone protein that prevents toxic aggregation of proteins; this function may be independent of its NAD(+) synthesis activity. The chain is Nicotinamide/nicotinic acid mononucleotide adenylyltransferase 3 from Homo sapiens (Human).